The following is a 2261-amino-acid chain: Phospholipid-transporting ATPase ABCA1 (2261 aa).

Residue C3 is the site of S-palmitoyl cysteine attachment. N14 carries an N-linked (GlcNAc...) asparagine glycan. The chain crosses the membrane as a helical span at residues 22-42; that stretch reads TCQLLLEVAWPLFIFLILISV. Residue C23 is the site of S-palmitoyl cysteine attachment. Topologically, residues 43–639 are extracellular; it reads RLSYPPYEQH…DIFLRVMSRS (597 aa). Residues 69-80 form an annulus domain 1 region; sequence WVQGIICNANNP. A disulfide bond links C75 and C309. N-linked (GlcNAc...) asparagine glycans are attached at residues N98, N151, N161, N196, N244, N292, N337, and N349. The interval 368–379 is annulus domain 2; sequence SRIIWKALKPLL. Residues N400, N478, N489, and N521 are each glycosylated (N-linked (GlcNAc...) asparagine). The tract at residues 564–594 is gateway domain; sequence ERTNKIKDGYWDPGPRADPFEDMRYVWGGFA. 5 helical membrane-spanning segments follow: residues 640 to 660, 683 to 703, 716 to 736, 745 to 765, and 777 to 797; these read MPLFMTLAWIYSVAVIIKGIV, FSWFISSLIPLLVSAGLLVVI, SVVFVFLSVFAVVTILQCFLI, LAAACGGIIYFTLYLPYVLCV, and IFASLLSPVAFGFGCEYFALF. A glycan (N-linked (GlcNAc...) asparagine) is linked at N820. The helical transmembrane segment at 827 to 847 threads the bilayer; sequence MMLFDTFLYGVMTWYIEAVFP. One can recognise an ABC transporter 1 domain in the interval 899 to 1131; the sequence is VSIQNLVKVY…LGTGYYLTLV (233 aa). 933 to 940 lines the ATP pocket; that stretch reads GHNGAGKT. The chain crosses the membrane as a helical span at residues 1041–1057; that stretch reads LSVALAFVGGSKVVILD. Residue S1042 is modified to Phosphoserine; by PKA. S-palmitoyl cysteine attachment occurs at residues C1110 and C1111. N-linked (GlcNAc...) asparagine glycosylation is found at N1144 and N1294. Residues 1283 to 1312 form a disordered region; the sequence is RPFTEDDAADPNDSDIDPESRETDLLSGMD. Over residues 1287–1299 the composition is skewed to acidic residues; the sequence is EDDAADPNDSDID. S1296 carries the post-translational modification Phosphoserine. The chain crosses the membrane as a helical span at residues 1351–1371; it reads IVLPAVFVCIALVFSLIVPPF. Topologically, residues 1372–1656 are extracellular; it reads GKYPSLELQP…ALMTTSVDVL (285 aa). N-linked (GlcNAc...) asparagine glycosylation occurs at N1453. A disulfide bridge connects residues C1463 and C1477. N1504 and N1637 each carry an N-linked (GlcNAc...) asparagine glycan. 6 helical membrane passes run 1657–1677, 1703–1723, 1735–1755, 1768–1788, 1802–1822, and 1852–1872; these read VSICVIFAMSFVPASFVVFLI, FVWDMCNYVVPATLVIIIFIC, LPVLALLLLLYGWSITPLMYP, VVLTSVNLFIGINGSVATFVL, ILKSVFLIFPHFCLGRGLIDM, and NLFAMAVEGVVFFLITVLIQY. Residues 1912–2144 form the ABC transporter 2 domain; the sequence is LEIKELTKIY…FGDGYTIVVR (233 aa). Residue 1946–1953 participates in ATP binding; it reads GVNGAGKS. N2044 is a glycosylation site (N-linked (GlcNAc...) asparagine). S2054 is modified (phosphoserine; by PKA). N-linked (GlcNAc...) asparagine glycosylation is present at N2238.

Belongs to the ABC transporter superfamily. ABCA family. Interacts with MEGF10. May interact with APOE1; functionally associated with APOE1 in the biogenesis of HDLs. Interacts with ABCA8; this interaction potentiates cholesterol efflux. Interacts with ABCA12 and NR1H2; this interaction is required for ABCA1 localization to the cell surface and is necessary for its normal activity and stability. Phosphorylation on Ser-2054 regulates phospholipid efflux. In terms of processing, palmitoylated by ZDHHC8. Palmitoylation is essential for localization to the plasma membrane. Widely expressed, but most abundant in macrophages.

The protein resides in the cell membrane. It localises to the endosome. It catalyses the reaction ATP + H2O + phospholipidSide 1 = ADP + phosphate + phospholipidSide 2.. The enzyme catalyses a 1,2-diacyl-sn-glycero-3-phosphocholine(out) + ATP + H2O = a 1,2-diacyl-sn-glycero-3-phosphocholine(in) + ADP + phosphate + H(+). It carries out the reaction a 1,2-diacyl-sn-glycero-3-phospho-L-serine(out) + ATP + H2O = a 1,2-diacyl-sn-glycero-3-phospho-L-serine(in) + ADP + phosphate + H(+). The catalysed reaction is a sphingomyelin(in) + ATP + H2O = a sphingomyelin(out) + ADP + phosphate + H(+). It catalyses the reaction cholesterol(in) + ATP + H2O = cholesterol(out) + ADP + phosphate + H(+). ATPase activity is decreased by cholesterol and ceramide. ATPase activity is stimulated by phosphatidylcholine and to a lesser degree by phosphatidylserine and sphingomyelin. Phospholipid translocase activity is highly reduced by berylium fluoride and aluminum flouride and reduced by N-ethylmaleimide. Catalyzes the translocation of specific phospholipids from the cytoplasmic to the extracellular/lumenal leaflet of membrane coupled to the hydrolysis of ATP. Thereby, participates in phospholipid transfer to apolipoproteins to form nascent high density lipoproteins/HDLs. Transports preferentially phosphatidylcholine over phosphatidylserine. May play a similar role in the efflux of intracellular cholesterol to apolipoproteins and the formation of nascent high density lipoproteins/HDLs. Translocates phospholipids from the outer face of the plasma membrane and forces it through its gateway and annulus into an elongated hydrophobic tunnel in its extracellular domain. The sequence is that of Phospholipid-transporting ATPase ABCA1 from Homo sapiens (Human).